The sequence spans 490 residues: UDP-N-acetylmuramoyl-L-alanyl-D-glutamate--2,6-diaminopimelate ligase (490 aa).

UDP-N-acetyl-alpha-D-muramoyl-L-alanyl-D-glutamate-binding positions include Leu22, Ser24, and 39 to 41 (HQT). 111–117 (GTNGKTT) lines the ATP pocket. UDP-N-acetyl-alpha-D-muramoyl-L-alanyl-D-glutamate-binding positions include Asn152, 153–154 (TT), Ser180, Gln186, and Arg188. Position 220 is an N6-carboxylysine (Lys220). Residues Arg385, 409–412 (DNPR), Gly460, and Glu464 each bind meso-2,6-diaminopimelate. The Meso-diaminopimelate recognition motif motif lies at 409 to 412 (DNPR).

It belongs to the MurCDEF family. MurE subfamily. The cofactor is Mg(2+). Carboxylation is probably crucial for Mg(2+) binding and, consequently, for the gamma-phosphate positioning of ATP.

The protein localises to the cytoplasm. The enzyme catalyses UDP-N-acetyl-alpha-D-muramoyl-L-alanyl-D-glutamate + meso-2,6-diaminopimelate + ATP = UDP-N-acetyl-alpha-D-muramoyl-L-alanyl-gamma-D-glutamyl-meso-2,6-diaminopimelate + ADP + phosphate + H(+). It participates in cell wall biogenesis; peptidoglycan biosynthesis. Catalyzes the addition of meso-diaminopimelic acid to the nucleotide precursor UDP-N-acetylmuramoyl-L-alanyl-D-glutamate (UMAG) in the biosynthesis of bacterial cell-wall peptidoglycan. This chain is UDP-N-acetylmuramoyl-L-alanyl-D-glutamate--2,6-diaminopimelate ligase, found in Yersinia pestis.